The chain runs to 1381 residues: EH domain-containing and endocytosis protein 1 (1381 aa).

2 consecutive EH domains span residues 14–113 (EQAF…NPAP) and 135–227 (DIAK…IRLE). 2 EF-hand domains span residues 47-82 (LPGQLLSQVWATVDIDNKGFLNLNEFSAALRMIAQL) and 167-202 (LPNQTLGEIWALCDRDASGVLDKSEFIMAMYLIQLC). 4 residues coordinate Ca(2+): aspartate 180, aspartate 182, serine 184, and glutamate 191. Residue threonine 238 is modified to Phosphothreonine. Residues serine 241 and serine 244 each carry the phosphoserine modification. Threonine 245 is subject to Phosphothreonine. Phosphoserine is present on residues serine 248 and serine 249. Residue threonine 251 is modified to Phosphothreonine. Serine 265 carries the post-translational modification Phosphoserine. Residues 276–311 (EKKQQFDAIFDSLDKQHAGSLSSAVLVPFFLSSRLN) form the EF-hand 3 domain. The region spanning 277-366 (KKQQFDAIFD…NELLQSPALG (90 aa)) is the EH 3 domain. Residues 389-535 (SKPSLQDMPH…SSPVKRTAST (147 aa)) form a disordered region. 2 stretches are compositionally biased toward polar residues: residues 404–424 (AVNTQPTVPQVLPQNSNNGSL) and 432–447 (PSFSSPSPTKAQTVVQ). A Phosphoserine modification is found at serine 419. Low complexity predominate over residues 448 to 470 (NNTNNSFSYDNNNGQATLQQQQP). Threonine 450, threonine 477, and threonine 487 each carry phosphothreonine. Positions 477–494 (THSSSGLKKFTPTSNFGQ) are enriched in polar residues. The residue at position 495 (serine 495) is a Phosphoserine. Residues 593 to 882 (GEASAQLSNA…RELSERQMNL (290 aa)) are a coiled coil. Residue lysine 674 forms a Glycyl lysine isopeptide (Lys-Gly) (interchain with G-Cter in ubiquitin) linkage. Serine 848 carries the post-translational modification Phosphoserine. The disordered stretch occupies residues 898–919 (SASNTDTTTKEATSRGNVHEDT). Basic and acidic residues predominate over residues 905–919 (TTKEATSRGNVHEDT). Phosphoserine is present on residues serine 931, serine 950, serine 964, serine 1008, serine 1012, and serine 1020. Disordered stretches follow at residues 933-1202 (LNVN…KDEF), 1214-1285 (VEED…QVSN), and 1298-1322 (SKAEPTKVATPSIPQQPIPLKNDPI). Residues 937–957 (RVKDDEEKTERTESDVFDRDV) show a composition bias toward basic and acidic residues. 2 stretches are compositionally biased toward polar residues: residues 960 to 989 (LGSQSDSENANTNNGTQSGNETANPNLTET) and 1005 to 1019 (RSQSLTSSVANNAPQ). Basic and acidic residues predominate over residues 1021–1036 (VRDDVELPETLEERDT). 2 stretches are compositionally biased toward polar residues: residues 1037–1049 (INNTANRDNTGNL) and 1061–1073 (ATASTDVLSNETT). A Phosphothreonine modification is found at threonine 1046. Phosphoserine is present on residues serine 1069, serine 1087, serine 1093, serine 1095, serine 1096, and serine 1100. Positions 1093-1103 (SVSSIQESPKI) are enriched in polar residues. Threonine 1111 is modified (phosphothreonine). The segment covering 1127 to 1139 (SDSSSSDDDEFED) has biased composition (acidic residues). Composition is skewed to polar residues over residues 1147–1164 (TVKTLQTPYNAQPTSSLE) and 1178–1195 (TSPSHNEGNSKKASTNSI). Phosphoserine occurs at positions 1181 and 1187. Acidic residues predominate over residues 1214 to 1226 (VEEDNGADSESEF). An able to bind biological membranes region spans residues 1217-1381 (DNGADSESEF…AATNFLLDSA (165 aa)). Positions 1253–1285 (NAFTGTLTSSSNPTIPKPQVQQQSTSDPAQVSN) are enriched in polar residues. The residue at position 1307 (threonine 1307) is a Phosphothreonine. A Glycyl lysine isopeptide (Lys-Gly) (interchain with G-Cter in ubiquitin) cross-link involves residue lysine 1329. The 43-residue stretch at 1338-1380 (ATTPKSLAVEELSGMGFTEEEAHNALEKCNWDLEAATNFLLDS) folds into the UBA domain. The residue at position 1343 (serine 1343) is a Phosphoserine.

It belongs to the VDP/USO1/EDE1 family. As to quaternary structure, interacts (via UBA domain) with monoubiquitin and ENT1 (via asparagine-proline-phenylalanine tripeptide motif called NPF). Interacts with PAL1 and SYP1.

Its subcellular location is the cytoplasm. Its function is as follows. Functions at the internalization step of the clathrin-mediated endocytosis (CME) as an early-acting scaffold protein. Requires clathrin adapter proteins, ENT1/2 and YAP1801/2, for normal spatiotemporal dynamics and viability. Binds to biological membranes in a ubiquitin-dependent manner. The sequence is that of EH domain-containing and endocytosis protein 1 (EDE1) from Saccharomyces cerevisiae (strain ATCC 204508 / S288c) (Baker's yeast).